The chain runs to 376 residues: Beta-centractin (376 aa).

Met-1 is subject to N-acetylmethionine. At Tyr-4 the chain carries 3'-nitrotyrosine.

This sequence belongs to the actin family. ARP1 subfamily.

The protein resides in the cytoplasm. Its subcellular location is the cytoskeleton. It is found in the microtubule organizing center. It localises to the centrosome. Its function is as follows. Component of a multi-subunit complex involved in microtubule based vesicle motility. It is associated with the centrosome. In Homo sapiens (Human), this protein is Beta-centractin (ACTR1B).